The primary structure comprises 326 residues: Phospho-N-acetylmuramoyl-pentapeptide-transferase (326 aa).

A run of 10 helical transmembrane segments spans residues 5 to 25 (GLLITIVVAFLITVLLSPIFI), 51 to 71 (TPTMGGLMIIFSIIITSLIMA), 82 to 102 (VWLLIFVLFGYGLLGFLDDFI), 122 to 142 (IIIALVFYFILRNQGFSTVIY), 148 to 168 (LQFDIGWFYAVLVIFMMVGAS), 180 to 200 (LLAGTAAIAFGAFAIIAWYGI), 204 to 224 (VVAVFSLAVVGALLGFLVFNA), 229 to 249 (VFMGDTGSLALGGAIAAISIL), 252 to 272 (LEILLIIIGGVFVIETLSVII), and 304 to 324 (VVTTFWLVGLLFAMLGVYIEV).

Belongs to the glycosyltransferase 4 family. MraY subfamily. Mg(2+) is required as a cofactor.

It localises to the cell membrane. The catalysed reaction is UDP-N-acetyl-alpha-D-muramoyl-L-alanyl-gamma-D-glutamyl-meso-2,6-diaminopimeloyl-D-alanyl-D-alanine + di-trans,octa-cis-undecaprenyl phosphate = di-trans,octa-cis-undecaprenyl diphospho-N-acetyl-alpha-D-muramoyl-L-alanyl-D-glutamyl-meso-2,6-diaminopimeloyl-D-alanyl-D-alanine + UMP. The protein operates within cell wall biogenesis; peptidoglycan biosynthesis. Its function is as follows. Catalyzes the initial step of the lipid cycle reactions in the biosynthesis of the cell wall peptidoglycan: transfers peptidoglycan precursor phospho-MurNAc-pentapeptide from UDP-MurNAc-pentapeptide onto the lipid carrier undecaprenyl phosphate, yielding undecaprenyl-pyrophosphoryl-MurNAc-pentapeptide, known as lipid I. This is Phospho-N-acetylmuramoyl-pentapeptide-transferase from Oceanobacillus iheyensis (strain DSM 14371 / CIP 107618 / JCM 11309 / KCTC 3954 / HTE831).